Here is an 86-residue protein sequence, read N- to C-terminus: Small ribosomal subunit protein eS21 (86 aa).

This sequence belongs to the eukaryotic ribosomal protein eS21 family. In terms of assembly, component of the 40S small ribosomal subunit.

The protein resides in the cytoplasm. The protein localises to the cytosol. Its subcellular location is the rough endoplasmic reticulum. This is Small ribosomal subunit protein eS21 (RPS21) from Suberites domuncula (Sponge).